Consider the following 255-residue polypeptide: Probable transcriptional regulatory protein CMS0715 (255 aa).

The protein belongs to the TACO1 family.

The protein localises to the cytoplasm. The sequence is that of Probable transcriptional regulatory protein CMS0715 from Clavibacter sepedonicus (Clavibacter michiganensis subsp. sepedonicus).